The chain runs to 299 residues: Protein U23 (299 aa).

The signal sequence occupies residues 1–27 (MRKSEFNAKSCFLMIGICVFNLNSSSC). A helical membrane pass occupies residues 247–267 (LVIWICGISFVGAFIIVIVIL).

The protein localises to the host membrane. The sequence is that of Protein U23 (U23) from Human herpesvirus 6B (strain Z29) (HHV-6 variant B).